Here is a 322-residue protein sequence, read N- to C-terminus: MLFATLEHILTHISFSTISIVITIHLITLLVRELGGLRDSSEKGMIVTFFSITGFLVSRWASSGHFPLSNLYESLISLSWALYILHTIPKIQNSKNDLSTITTPSTILTQGFATSGLLTEMHQSTILVPALQSQWLMMHVSMMLLSYATLLGGPPLSAAILIIRFRNNFHFFSKKKKNVLNKTFLFSDIKYFYAKRSALKRTSVPSFPNYYKYQLTERLDSWSYRVISLGFTLLTGGILGGAVWANEAWGAYWNWDPKETWAFITWTIFAIYLHSRTHPNWKGTNSALIASIGFLIIWICYFGINLLGIGLHSYGSFTLTPK.

6 helical membrane-spanning segments follow: residues 9 to 29 (ILTH…LITL), 44 to 64 (GMIV…ASSG), 143 to 163 (MLLS…ILII), 226 to 246 (VISL…VWAN), 259 to 276 (ETWA…LHSR), and 289 to 309 (IASI…LLGI).

This sequence belongs to the CcmF/CycK/Ccl1/NrfE/CcsA family. As to quaternary structure, may interact with Ccs1.

It is found in the plastid. Its subcellular location is the chloroplast thylakoid membrane. Functionally, required during biogenesis of c-type cytochromes (cytochrome c6 and cytochrome f) at the step of heme attachment. The polypeptide is Cytochrome c biogenesis protein CcsA (Triticum aestivum (Wheat)).